Here is a 988-residue protein sequence, read N- to C-terminus: Transposase for transposon Tn501 (988 aa).

Belongs to the transposase 7 family.

Its function is as follows. Required for transposition of transposon Tn501. This is Transposase for transposon Tn501 (tnpA) from Pseudomonas aeruginosa.